A 457-amino-acid chain; its full sequence is Argininosuccinate lyase (457 aa).

This sequence belongs to the lyase 1 family. Argininosuccinate lyase subfamily.

It localises to the cytoplasm. It catalyses the reaction 2-(N(omega)-L-arginino)succinate = fumarate + L-arginine. The protein operates within amino-acid biosynthesis; L-arginine biosynthesis; L-arginine from L-ornithine and carbamoyl phosphate: step 3/3. The protein is Argininosuccinate lyase of Escherichia coli O139:H28 (strain E24377A / ETEC).